The following is a 781-amino-acid chain: Matrix non-peptidase homolog 1 (781 aa).

Positions 1-27 (MTPPPASPSKKAKSSWLLIALIAVIIG) are cleaved as a signal peptide. Residue Asn54 is glycosylated (N-linked (GlcNAc...) asparagine). Residues 63–94 (TSKATVSTTTTQSATTPSTTTTRIEETTTTTS) show a composition bias toward low complexity. The disordered stretch occupies residues 63–113 (TSKATVSTTTTQSATTPSTTTTRIEETTTTTSGAFDESVKNSEASTSTIPT). 4 N-linked (GlcNAc...) asparagine glycosylation sites follow: Asn183, Asn341, Asn375, and Asn520.

The sequence is that of Matrix non-peptidase homolog 1 (mnp-1) from Caenorhabditis elegans.